The following is a 599-amino-acid chain: DNA topoisomerase 4 subunit B (599 aa).

Residues Y6, N51, D77, 110–116, and K311 contribute to the ATP site; that span reads GLNGVGT. Positions 397–507 constitute a Toprim domain; it reads TMIFLTEGDS…NGHMYILETP (111 aa). E403, D472, and D474 together coordinate Mg(2+).

This sequence belongs to the type II topoisomerase family. In terms of assembly, heterotetramer composed of ParC and ParE. It depends on Mg(2+) as a cofactor. Requires Mn(2+) as cofactor. Ca(2+) is required as a cofactor.

It catalyses the reaction ATP-dependent breakage, passage and rejoining of double-stranded DNA.. Topoisomerase IV is essential for chromosome segregation. It relaxes supercoiled DNA. Performs the decatenation events required during the replication of a circular DNA molecule. This Borreliella burgdorferi (strain ATCC 35210 / DSM 4680 / CIP 102532 / B31) (Borrelia burgdorferi) protein is DNA topoisomerase 4 subunit B (parE).